Reading from the N-terminus, the 189-residue chain is Large ribosomal subunit protein uL5 (189 aa).

This sequence belongs to the universal ribosomal protein uL5 family. Part of the 50S ribosomal subunit; part of the 5S rRNA/L5/L18/L25 subcomplex. Contacts the 5S rRNA and the P site tRNA. Forms a bridge to the 30S subunit in the 70S ribosome.

Its function is as follows. This is one of the proteins that bind and probably mediate the attachment of the 5S RNA into the large ribosomal subunit, where it forms part of the central protuberance. In the 70S ribosome it contacts protein S13 of the 30S subunit (bridge B1b), connecting the 2 subunits; this bridge is implicated in subunit movement. Contacts the P site tRNA; the 5S rRNA and some of its associated proteins might help stabilize positioning of ribosome-bound tRNAs. The polypeptide is Large ribosomal subunit protein uL5 (Parafrankia sp. (strain EAN1pec)).